We begin with the raw amino-acid sequence, 1588 residues long: Paternally-expressed gene 3 protein (1588 aa).

Positions 46-128 (HQRFRNLIYV…TLLENYKEMY (83 aa)) constitute an SCAN box domain. Disordered regions lie at residues 128–230 (YQPE…ESYQ), 266–306 (DGHS…RRGI), and 319–349 (KFIKDVSRSSKSGRARESSDRSQRFPRMSDD). Residues 129 to 142 (QPEDDNNSDVTSDD) show a composition bias toward acidic residues. 4 stretches are compositionally biased toward basic and acidic residues: residues 143-152 (DMTRNRRESS), 161-182 (SGDRDWDRRGRSRDMEPRDRWS), 206-225 (FEMDRDDDRDSRAYESRSQD), and 295-306 (PEAKKSTHRRGI). C2H2-type zinc fingers lie at residues 454-476 (YVCDECGRSFSVISEFVEHQIMH), 507-529 (FECKDCGETFNKSAALAEHRKIH), and 565-587 (YECRVCKETFLHSSALIEHQKIH). Residues 588-607 (FGDDKDNEREHERERERGET) show a composition bias toward basic and acidic residues. A disordered region spans residues 588 to 610 (FGDDKDNEREHERERERGETFRP). Residues 627–649 (YECKVCGETFLHSSSLKEHQKIH) form a C2H2-type 4 zinc finger. Residues 838–930 (LVASKPPRSH…EFSVPSSNVR (93 aa)) are disordered. The span at 868 to 881 (LNDKRQKIPARENP) shows a compositional bias: basic and acidic residues. The C2H2-type 5 zinc finger occupies 969 to 991 (YECQECGECFAHSSDLTEHQKIH). Residues 1056-1104 (EKSHGEESQGENTDGEETHSEETHGQETIEDPVIQGSDMEDPQKDDPDD) form a disordered region. The span at 1071-1082 (EETHSEETHGQE) shows a compositional bias: basic and acidic residues. C2H2-type zinc fingers lie at residues 1107–1129 (YECEDCGLGFVDLTDLTDHQKVH), 1163–1185 (YECPKCGESFIHSSFLFEHQRIH), 1225–1247 (IRCLLCGQGFIHSSALNEHMRLH), 1282–1304 (FECAVCGESFINPAELADHVTVH), and 1332–1354 (YECKDCGKSFIHSTVLTKHKELH). A disordered region spans residues 1393–1495 (EAAEPEVEAX…GIEDPEEGED (103 aa)). The segment covering 1395–1415 (AEPEVEAXEPEVEAAEPEVEA) has biased composition (acidic residues). 7 consecutive repeat copies span residues 1397 to 1403 (PEVEAXE), 1404 to 1410 (PEVEAAE), 1411 to 1417 (PEVEAAE), 1418 to 1422 (PNGEA), 1425 to 1429 (PDGEA), 1432 to 1436 (PIGEA), and 1439 to 1443 (PNGEA). The interval 1397 to 1417 (PEVEAXEPEVEAAEPEVEAAE) is 3 X 7 AA repeat of P-E-V-E-A-A-E. Residues 1418 to 1443 (PNGEAEGPDGEAAEPIGEAGQPNGEA) form a 4 X 5 AA repeat of P-X-G-E-A region. Acidic residues-rich tracts occupy residues 1449–1466 (DADEPDGAGIEDPEERAE) and 1475–1495 (PEGDADEPDGVGIEDPEEGED). C2H2-type zinc fingers lie at residues 1505 to 1527 (YDCHECTETFTSSTAFGEHLKTH) and 1564 to 1586 (FKCDVCGQLFNDRLSLARHQNTH).

This sequence belongs to the krueppel C2H2-type zinc-finger protein family. Homodimer. Interacts with SIAH1A and SIAH2. Interacts with TRAF2.

The protein localises to the nucleus. It is found in the cytoplasm. Functionally, induces apoptosis in cooperation with SIAH1A. Acts as a mediator between p53/TP53 and BAX in a neuronal death pathway that is activated by DNA damage. Acts synergistically with TRAF2 and inhibits TNF induced apoptosis through activation of NF-kappa-B. In Pan paniscus (Pygmy chimpanzee), this protein is Paternally-expressed gene 3 protein (PEG3).